Consider the following 394-residue polypeptide: Major outer membrane porin, serovar B (394 aa).

An N-terminal signal peptide occupies residues 1–22 (MKKLLKSVLVFAALSSASSLQA).

This sequence belongs to the chlamydial porin (CP) (TC 1.B.2) family. As to quaternary structure, part of a disulfide cross-linked outer membrane complex (COMC) composed of the major outer membrane porin (MOMP), the small cysteine-rich protein (OmcA) and the large cysteine-rich periplasmic protein (OmcB).

The protein resides in the cell outer membrane. Its function is as follows. In elementary bodies (EBs, the infectious stage, which is able to survive outside the host cell) provides the structural integrity of the outer envelope through disulfide cross-links with the small cysteine-rich protein and the large cysteine-rich periplasmic protein. It has been described in publications as the Sarkosyl-insoluble COMC (Chlamydia outer membrane complex), and serves as the functional equivalent of peptidoglycan. In terms of biological role, permits diffusion of specific solutes through the outer membrane. The polypeptide is Major outer membrane porin, serovar B (ompA) (Chlamydia trachomatis).